The sequence spans 591 residues: Isocitrate dehydrogenase kinase/phosphatase (591 aa).

Residues 315–321 (APGVKGM) and lysine 336 contribute to the ATP site. The active site involves aspartate 371.

Belongs to the AceK family.

The protein localises to the cytoplasm. It carries out the reaction L-seryl-[isocitrate dehydrogenase] + ATP = O-phospho-L-seryl-[isocitrate dehydrogenase] + ADP + H(+). In terms of biological role, bifunctional enzyme which can phosphorylate or dephosphorylate isocitrate dehydrogenase (IDH) on a specific serine residue. This is a regulatory mechanism which enables bacteria to bypass the Krebs cycle via the glyoxylate shunt in response to the source of carbon. When bacteria are grown on glucose, IDH is fully active and unphosphorylated, but when grown on acetate or ethanol, the activity of IDH declines drastically concomitant with its phosphorylation. The chain is Isocitrate dehydrogenase kinase/phosphatase from Pectobacterium atrosepticum (strain SCRI 1043 / ATCC BAA-672) (Erwinia carotovora subsp. atroseptica).